The sequence spans 216 residues: Chaperone protein TorD (216 aa).

The protein belongs to the TorD/DmsD family. TorD subfamily.

The protein resides in the cytoplasm. Functionally, involved in the biogenesis of TorA. Acts on TorA before the insertion of the molybdenum cofactor and, as a result, probably favors a conformation of the apoenzyme that is competent for acquiring the cofactor. The sequence is that of Chaperone protein TorD from Photobacterium profundum (strain SS9).